Reading from the N-terminus, the 114-residue chain is Replication initiation control protein YabA (114 aa).

Residues His-79, Cys-81, Cys-95, and Cys-98 each contribute to the Zn(2+) site.

Belongs to the YabA family. Homotetramer. Interacts with both DnaA and DnaN, acting as a bridge between these two proteins. Zn(2+) serves as cofactor.

It is found in the cytoplasm. It localises to the nucleoid. In terms of biological role, involved in control of chromosome replication initiation. Inhibits the cooperative binding of DnaA to the oriC region, thus negatively regulating initiation of chromosome replication. Inhibits the ability of DnaA-ATP to form a helix on DNA; does not disassemble preformed DnaA-DNA helices. Decreases the residence time of DnaA on the chromosome at its binding sites (oriC, replication forks and promoter-binding sites). Tethers DnaA to the replication machinery via the DNA polymerase beta sliding clamp subunit (dnaN). Associates with oriC and other DnaA targets on the chromosome in a DnaA-dependent manner. The polypeptide is Replication initiation control protein YabA (Lactobacillus gasseri (strain ATCC 33323 / DSM 20243 / BCRC 14619 / CIP 102991 / JCM 1131 / KCTC 3163 / NCIMB 11718 / NCTC 13722 / AM63)).